Here is a 351-residue protein sequence, read N- to C-terminus: Divinyl chlorophyll a/b light-harvesting protein PcbC (351 aa).

6 consecutive transmembrane segments (helical) span residues F27–L47, L64–T84, C89–L109, V203–A223, V244–A264, and L306–L326.

The protein belongs to the PsbB/PsbC family. IsiA/Pcb subfamily. The antenna complex consists of divinyl chlorophylls (a and b) and divinyl chlorophyll a/b binding proteins and binds more divinyl chlorophyll b than does the antenna complex from high-light-adapted Prochlorococcus. Requires divinyl chlorophyll a as cofactor. Divinyl chlorophyll b serves as cofactor.

It is found in the cellular thylakoid membrane. The antenna complex functions as a light receptor, it captures and delivers excitation energy to photosystems II and I. The Prochlorales pcb genes are not related to higher plant LHCs. The protein is Divinyl chlorophyll a/b light-harvesting protein PcbC (pcbC) of Prochlorococcus marinus (strain SARG / CCMP1375 / SS120).